The sequence spans 254 residues: Splicing factor tls1 (254 aa).

Positions 69–83 (KEKQLNTANEPHEAN) are enriched in basic and acidic residues. Disordered regions lie at residues 69-90 (KEKQ…SAQS) and 195-216 (RKRQ…LRTS). Over residues 195-204 (RKRQKKRARM) the composition is skewed to basic residues. Residues 205–216 (KEKLDSKALRTS) are compositionally biased toward basic and acidic residues.

This sequence belongs to the TLS1 family. As to quaternary structure, component of the spliceosome. Interacts with brr2.

It is found in the cytoplasm. Its subcellular location is the nucleus. Functionally, plays a role in pre-mRNA splicing by facilitating excision of introns featuring long spacing between the branchpoint and 3'-splice site. Assists the splicing of several components involved in chromatin organization, such as several shelterin complex subunits. This Schizosaccharomyces pombe (strain 972 / ATCC 24843) (Fission yeast) protein is Splicing factor tls1.